The sequence spans 135 residues: RxLR effector protein Avh5 (135 aa).

The signal sequence occupies residues 1 to 19; sequence MRLQFFLVMAVATLATISA. Positions 43–71 match the RxLR-dEER motif; sequence RFLRTADTDIVYEPKVHNPGKKQVFIEDK. Positions 81, 83, and 84 each coordinate a 1,2-diacyl-sn-glycero-3-phospho-(1D-myo-inositol-3-phosphate).

Belongs to the RxLR effector family.

It localises to the secreted. It is found in the host cell. Its function is as follows. Effector that suppresses plant defense responses during the early stages of pathogen infection. Suppresses cell death induced by effectors and PAMPs in plant hosts. The polypeptide is RxLR effector protein Avh5 (Phytophthora sojae (Soybean stem and root rot agent)).